The sequence spans 409 residues: Sex-determination protein fem-3 (409 aa).

In terms of assembly, component of a complex containing fem-1, fem-2 and fem-3. Interacts with fem-1 and fem-2 (via N-terminus). Part of a E3 ubiquitin-protein ligase complex, at least composed of cul-2, elc-1, tra-1, fem-1, fem-2 and fem-3; mediates the ubiquitination and subsequent proteasomal degradation of tra-1. Interacts with sel-10. Interacts with tra-2.

Its function is as follows. Required for male development. In XO (male) animals, fem-3 directs male differentiation in all tissues. In XX (hermaphrodite animals), it specifies the first 80 or so germ cells to be sperm. Negatively regulates male development when bound to tra-2. This is Sex-determination protein fem-3 from Caenorhabditis briggsae.